The chain runs to 121 residues: Chromosome transmission fidelity protein 8 homolog (121 aa).

It belongs to the CTF8 family. In terms of assembly, component of the CTF18-RFC complex, which consists of CTF18, CTF8, DSCC1, RFC2, RFC3, RFC4 and RFC5. The CTF18-RFC complex does not interact with the Rad9/Rad1/Hus1 complex. The CTF18-RFC complex interacts with POLH. CTF18/CTF8/DSCC1 associate with PCNA. CTF8 exists as a dimer with DSCC1.

It is found in the nucleus. Chromosome cohesion factor involved in sister chromatid cohesion and fidelity of chromosome transmission. Component of one of the cell nuclear antigen loader complexes, CTF18-replication factor C (CTF18-RFC), which consists of CTF18, CTF8, DSCC1, RFC2, RFC3, RFC4 and RFC5. The CTF18-RFC complex binds to single-stranded and primed DNAs and has weak ATPase activity that is stimulated the presence of primed DNA, replication protein A (RPA) and proliferating cell nuclear antigen (PCNA). The CTF18-RFC complex catalyzes the ATP-dependent loading of PCNA onto primed and gapped DNA. It also interacts with and stimulates POLH, which is suggestive of a protein network that coordinates DNA repair, recombination and chromosome cohesion reactions with replication fork progression. This Rattus norvegicus (Rat) protein is Chromosome transmission fidelity protein 8 homolog.